Reading from the N-terminus, the 142-residue chain is Transcriptional regulator MraZ (142 aa).

SpoVT-AbrB domains lie at 5-51 and 77-120; these read ASAL…PRPE and AMDV…DAQT.

This sequence belongs to the MraZ family. As to quaternary structure, forms oligomers.

The protein localises to the cytoplasm. Its subcellular location is the nucleoid. In Paraburkholderia phytofirmans (strain DSM 17436 / LMG 22146 / PsJN) (Burkholderia phytofirmans), this protein is Transcriptional regulator MraZ.